We begin with the raw amino-acid sequence, 277 residues long: Undecaprenyl-diphosphatase (277 aa).

6 helical membrane-spanning segments follow: residues 53–73 (LGAI…VILG), 85–105 (VNLL…ADLI), 108–128 (WLFN…VMLW), 183–203 (AATE…AAYS), 215–235 (GDLP…MLAV), and 250–270 (FAWY…LGVV).

Belongs to the UppP family.

It is found in the cell inner membrane. It catalyses the reaction di-trans,octa-cis-undecaprenyl diphosphate + H2O = di-trans,octa-cis-undecaprenyl phosphate + phosphate + H(+). Functionally, catalyzes the dephosphorylation of undecaprenyl diphosphate (UPP). Confers resistance to bacitracin. In Azotobacter vinelandii (strain DJ / ATCC BAA-1303), this protein is Undecaprenyl-diphosphatase.